Here is a 208-residue protein sequence, read N- to C-terminus: MNNFLQQINSYIKEAFNAGKYLYNGLSVTFDHLRRRPVTVQYPYEKLIPSERYRGRIHYEFDKCIACEVCVRVCPINLPVVDWVMNKETKKKELRNYSIDFGVCIFCGNCVEYCPTNCLSMTEEYELATFDRHNLNFDNVALGRLPTNVTTDPSVKPLRELAYLPKGVMDPHEIPASDTRVGKLPEEVYDWMRPEPNENKDKVSNQIN.

2 4Fe-4S ferredoxin-type domains span residues Gly-55–Val-84 and Arg-95–Glu-124. [4Fe-4S] cluster contacts are provided by Cys-64, Cys-67, Cys-70, Cys-74, Cys-104, Cys-107, Cys-110, and Cys-114.

It belongs to the complex I 23 kDa subunit family. As to quaternary structure, NDH-1 is composed of at least 11 different subunits. [4Fe-4S] cluster serves as cofactor.

The protein localises to the cellular thylakoid membrane. The catalysed reaction is a plastoquinone + NADH + (n+1) H(+)(in) = a plastoquinol + NAD(+) + n H(+)(out). It carries out the reaction a plastoquinone + NADPH + (n+1) H(+)(in) = a plastoquinol + NADP(+) + n H(+)(out). In terms of biological role, NDH-1 shuttles electrons from an unknown electron donor, via FMN and iron-sulfur (Fe-S) centers, to quinones in the respiratory and/or the photosynthetic chain. The immediate electron acceptor for the enzyme in this species is believed to be plastoquinone. Couples the redox reaction to proton translocation, and thus conserves the redox energy in a proton gradient. In Prochlorococcus marinus (strain MIT 9215), this protein is NAD(P)H-quinone oxidoreductase subunit I.